Consider the following 154-residue polypeptide: Transcriptional repressor NrdR (154 aa).

Residues 3–34 fold into a zinc finger; the sequence is CPFCRHPDSRVIDSRETDEGQAIRRRRSCPEC. The 91-residue stretch at 46–136 folds into the ATP-cone domain; the sequence is LAVVKRSGVT…VYRSFSSADD (91 aa).

It belongs to the NrdR family. The cofactor is Zn(2+).

In terms of biological role, negatively regulates transcription of bacterial ribonucleotide reductase nrd genes and operons by binding to NrdR-boxes. The sequence is that of Transcriptional repressor NrdR from Mycobacterium bovis (strain ATCC BAA-935 / AF2122/97).